Consider the following 184-residue polypeptide: Rubrerythrin-2 (184 aa).

The region spanning 2-146 (SVKNAMTADF…DAQDSAKENK (145 aa)) is the Ferritin-like diiron domain. Fe(3+) contacts are provided by E19, E52, E94, E97, E128, H131, C156, C159, C171, and C174. Residues 151–184 (GKVYICPVCGFTTLDENIEQCPICGVKKDKFQAF) form the Rubredoxin-like domain.

Requires Fe(3+) as cofactor.

The enzyme catalyses H2O2 + NADH + H(+) = NAD(+) + 2 H2O. Rubredoxin (Rd) increases the NADH consumption rate by serving as an intermediary electron-transfer shuttle between NROR and Rbr2. Its function is as follows. Functions as the terminal component of an NADH peroxidase (NADH:H(2)O(2) oxidoreductase) when using NADH:rubredoxin oxidoreductase (NROR) as the electron transport intermediary from NADH to Rbr2. The chain is Rubrerythrin-2 (rbr2) from Clostridium acetobutylicum (strain ATCC 824 / DSM 792 / JCM 1419 / IAM 19013 / LMG 5710 / NBRC 13948 / NRRL B-527 / VKM B-1787 / 2291 / W).